A 103-amino-acid chain; its full sequence is Large ribosomal subunit protein bL21 (103 aa).

This sequence belongs to the bacterial ribosomal protein bL21 family. Part of the 50S ribosomal subunit. Contacts protein L20.

In terms of biological role, this protein binds to 23S rRNA in the presence of protein L20. The chain is Large ribosomal subunit protein bL21 from Desulfitobacterium hafniense (strain DSM 10664 / DCB-2).